A 225-amino-acid chain; its full sequence is MMYHIPGVLSPQDVARFREHLEQAEWVDGRVTTGAQGAQVKNNQQVDTRSALYAALQNEVLNAVNQHALFFAAALPRTLSTPLFNRYQNNETYGFHVDGAVRSHPQNGWMRTDLSATLFLSDPESYDGGELVVNDTFGQHRVKLPAGDLVLYPSSSLHCVTPVTRGVRVASFMWIQSMIRDDKKRAMLFELDNNIQSLKSRYGESEEILSLLNLYHNLLREWSEI.

The 100-residue stretch at 78–177 (TLSTPLFNRY…RVASFMWIQS (100 aa)) folds into the Fe2OG dioxygenase domain. Positions 96, 98, and 158 each coordinate Fe cation. Arg-168 provides a ligand contact to 2-oxoglutarate.

Fe(2+) serves as cofactor. The cofactor is L-ascorbate.

This Escherichia coli O81 (strain ED1a) protein is PKHD-type hydroxylase YbiX.